A 657-amino-acid chain; its full sequence is UvrABC system protein B (657 aa).

A Helicase ATP-binding domain is found at 25–182 (KSIKQGNEFQ…KKLIEIQYER (158 aa)). 38–45 (GVTGSGKT) contacts ATP. The short motif at 91-114 (YYDYYQPEAYVPQTDTFIEKDASI) is the Beta-hairpin element. In terms of domain architecture, Helicase C-terminal spans 429–595 (QIDDLYTEIQ…TINKEVRELI (167 aa)). The region spanning 621-656 (KKLIKEYTDEMKLAAKNLQFERAAQLRDKIEELKGK) is the UVR domain.

This sequence belongs to the UvrB family. Forms a heterotetramer with UvrA during the search for lesions. Interacts with UvrC in an incision complex.

It localises to the cytoplasm. The UvrABC repair system catalyzes the recognition and processing of DNA lesions. A damage recognition complex composed of 2 UvrA and 2 UvrB subunits scans DNA for abnormalities. Upon binding of the UvrA(2)B(2) complex to a putative damaged site, the DNA wraps around one UvrB monomer. DNA wrap is dependent on ATP binding by UvrB and probably causes local melting of the DNA helix, facilitating insertion of UvrB beta-hairpin between the DNA strands. Then UvrB probes one DNA strand for the presence of a lesion. If a lesion is found the UvrA subunits dissociate and the UvrB-DNA preincision complex is formed. This complex is subsequently bound by UvrC and the second UvrB is released. If no lesion is found, the DNA wraps around the other UvrB subunit that will check the other stand for damage. This is UvrABC system protein B from Clostridium botulinum (strain Eklund 17B / Type B).